A 210-amino-acid polypeptide reads, in one-letter code: Small ribosomal subunit protein uS3 (210 aa).

Residues 38–106 (IRAWLKKRLA…EVQINIVEIR (69 aa)) enclose the KH type-2 domain.

Belongs to the universal ribosomal protein uS3 family. As to quaternary structure, part of the 30S ribosomal subunit. Forms a tight complex with proteins S10 and S14.

Binds the lower part of the 30S subunit head. Binds mRNA in the 70S ribosome, positioning it for translation. This Magnetococcus marinus (strain ATCC BAA-1437 / JCM 17883 / MC-1) protein is Small ribosomal subunit protein uS3.